The following is a 126-amino-acid chain: Large ribosomal subunit protein bL19 (126 aa).

Belongs to the bacterial ribosomal protein bL19 family.

In terms of biological role, this protein is located at the 30S-50S ribosomal subunit interface and may play a role in the structure and function of the aminoacyl-tRNA binding site. The chain is Large ribosomal subunit protein bL19 from Bordetella bronchiseptica (strain ATCC BAA-588 / NCTC 13252 / RB50) (Alcaligenes bronchisepticus).